We begin with the raw amino-acid sequence, 234 residues long: Opacity protein opA65 (234 aa).

Residue A1 is a signal peptide. The tract at residues 154–179 (TVTPKPKNGTQGGPVKSTSPIPAYHE) is disordered.

Belongs to the opacity porin family.

The protein resides in the cell outer membrane. Implicated in a number of adherence functions. OPA proteins are implicated in pathogenesis and are subject to phase variation. The chain is Opacity protein opA65 from Neisseria gonorrhoeae.